The primary structure comprises 278 residues: Tryptophan synthase alpha chain (278 aa).

Residues Glu-50 and Asp-61 each act as proton acceptor in the active site.

This sequence belongs to the TrpA family. Tetramer of two alpha and two beta chains.

It carries out the reaction (1S,2R)-1-C-(indol-3-yl)glycerol 3-phosphate + L-serine = D-glyceraldehyde 3-phosphate + L-tryptophan + H2O. It functions in the pathway amino-acid biosynthesis; L-tryptophan biosynthesis; L-tryptophan from chorismate: step 5/5. In terms of biological role, the alpha subunit is responsible for the aldol cleavage of indoleglycerol phosphate to indole and glyceraldehyde 3-phosphate. In Rhodopseudomonas palustris (strain BisB5), this protein is Tryptophan synthase alpha chain.